A 434-amino-acid chain; its full sequence is Protein POLLENLESS 3 (434 aa).

A disordered region spans residues 13–47; it reads VYYTPPPARTSDHVAAMPMTERRRPPYSCSSSSER. The Nuclear localization signal 1 motif lies at 34 to 37; that stretch reads RRRP. TPR repeat units follow at residues 95–131, 133–164, 191–224, and 241–274; these read DSAL…ESQD, IDNL…LEQG, ARIL…ERDK, and PEAK…AVEM. Positions 142-166 form a coiled coil; the sequence is KKSGRIEEEAVLLEHKLQTLEQGMG. The interval 309 to 329 is disordered; sequence TANKNYSDVSSSPASVRPNSA. The span at 310–326 shows a compositional bias: polar residues; it reads ANKNYSDVSSSPASVRP. The short motif at 377–380 is the Nuclear localization signal 2 element; the sequence is KRKK. Residues 393 to 408 are compositionally biased toward basic and acidic residues; that stretch reads VKDTADGPKSESKKSW. The interval 393–434 is disordered; that stretch reads VKDTADGPKSESKKSWADIAEEEEAEEEEEERLQGELKTAEM. Positions 408 to 434 form a coiled coil; the sequence is WADIAEEEEAEEEEEERLQGELKTAEM. Residues 411-423 show a composition bias toward acidic residues; the sequence is IAEEEEAEEEEEE. Positions 424–434 are enriched in basic and acidic residues; that stretch reads RLQGELKTAEM.

It belongs to the MS5 protein family. Expressed at low levels mostly in floral organs during meiosis. Also barely detectable in leaves, stems and roots.

It localises to the nucleus. In terms of biological role, essential for male fertility, especially for microspore and pollen grain production. Involved in the regulation of cell division after male meiosis I and II to facilitate exit from meiosis and transition to G1. The chain is Protein POLLENLESS 3 from Arabidopsis thaliana (Mouse-ear cress).